A 285-amino-acid polypeptide reads, in one-letter code: 1,4-dihydroxy-2-naphthoyl-CoA synthase (285 aa).

Substrate-binding positions include Arg-45, 84-89 (SGGDQK), Tyr-97, 129-133 (YSIGG), Thr-155, Ser-161, Tyr-258, and Lys-273. Hydrogencarbonate is bound at residue 154–156 (QTG).

The protein belongs to the enoyl-CoA hydratase/isomerase family. MenB subfamily. Homohexamer. Dimer of a homotrimer. The cofactor is hydrogencarbonate.

It catalyses the reaction 2-succinylbenzoyl-CoA + H(+) = 1,4-dihydroxy-2-naphthoyl-CoA + H2O. It functions in the pathway quinol/quinone metabolism; 1,4-dihydroxy-2-naphthoate biosynthesis; 1,4-dihydroxy-2-naphthoate from chorismate: step 6/7. The protein operates within quinol/quinone metabolism; menaquinone biosynthesis. With respect to regulation, inhibited by sulfite and nitrate. In terms of biological role, converts o-succinylbenzoyl-CoA (OSB-CoA) to 1,4-dihydroxy-2-naphthoyl-CoA (DHNA-CoA). The protein is 1,4-dihydroxy-2-naphthoyl-CoA synthase of Escherichia coli (strain K12).